The following is a 213-amino-acid chain: Transcriptional regulatory protein CrdR (213 aa).

The Response regulatory domain maps to 4 to 119 (KIFLLEDDYL…ELEARIKRFF (116 aa)). 4-aspartylphosphate is present on Asp-53. Positions 121-212 (DDPIEIMPNI…HKGVGYRFNP (92 aa)) form a DNA-binding region, ompR/PhoB-type.

Post-translationally, phosphorylated by CrdS.

Its function is as follows. Member of the two-component regulatory system CrdR/CrdS that induces the transcriptional induction of the copper resistance determinant CrdA. Upon phosphorylation by CrdS, functions as a transcriptional regulator by direct binding to promoter regions of target genes including the crdA promoter or nitric oxide-responsive gene promoters. In Helicobacter pylori (strain ATCC 700392 / 26695) (Campylobacter pylori), this protein is Transcriptional regulatory protein CrdR.